The primary structure comprises 162 residues: Caveolin-2 (162 aa).

At 1 to 86 (MGLETEKADV…FEISKYVIYK (86 aa)) the chain is on the cytoplasmic side. Tyr-19 is subject to Phosphotyrosine; by SRC. Residues Ser-20 and Ser-23 each carry the phosphoserine modification. Residue Tyr-27 is modified to Phosphotyrosine; by SRC. Ser-36 carries the phosphoserine modification. Positions 87–107 (FLTFFLAIPMAFAAGILFAIL) form an intramembrane region, helical. Residues 108 to 162 (SCLHIWIIMPFVKTCLMVLPSVQTIWKTITDVVIAPLCTSVGRSFSSISLQLSHD) lie on the Cytoplasmic side of the membrane.

It belongs to the caveolin family. Monomer or homodimer. Interacts with CAV1; the interaction forms a stable heterooligomeric complex that is required for targeting to lipid rafts and for caveolae formation. Tyrosine phosphorylated forms do not form heterooligomers with the Tyr-19-phosphorylated form existing as a monomer or dimer, and the Tyr-27-form as a monomer only. Interacts (tyrosine phosphorylated form) with the SH2 domain-containing proteins, RASA1, NCK1 and SRC. Interacts (tyrosine phosphorylated form) with INSR, the interaction (Tyr-27-phosphorylated form) is increased on insulin stimulation. Interacts (Tyr-19 phosphorylated form) with MAPK1 (phosphorylated form); the interaction, promoted by insulin, leads to nuclear location and MAPK1 activation. Interacts with STAT3; the interaction is increased on insulin-induced tyrosine phosphorylation leading to STAT activation. In terms of processing, phosphorylated on serine and tyrosine residues. CAV1 promotes phosphorylation on Ser-23 which then targets the complex to the plasma membrane, lipid rafts and caveolae. Phosphorylation on Ser-36 appears to modulate mitosis in endothelial cells. Phosphorylation on both Tyr-19 and Tyr-27 is required for insulin-induced 'Ser-727' phosphorylation of STAT3 and its activation. Phosphorylation on Tyr-19 is required for insulin-induced phosphorylation of MAPK1 and DNA binding of STAT3. Tyrosine phosphorylation is induced by both EGF and insulin (By. similarity).

The protein localises to the nucleus. It is found in the cytoplasm. The protein resides in the golgi apparatus membrane. It localises to the cell membrane. Its subcellular location is the membrane. The protein localises to the caveola. Its function is as follows. May act as a scaffolding protein within caveolar membranes. Interacts directly with G-protein alpha subunits and can functionally regulate their activity. Acts as an accessory protein in conjunction with CAV1 in targeting to lipid rafts and driving caveolae formation. The Ser-36 phosphorylated form has a role in modulating mitosis in endothelial cells. Positive regulator of cellular mitogenesis of the MAPK signaling pathway. Required for the insulin-stimulated nuclear translocation and activation of MAPK1 and STAT3, and the subsequent regulation of cell cycle progression. The sequence is that of Caveolin-2 (CAV2) from Mustela putorius furo (European domestic ferret).